The primary structure comprises 38 residues: Large ribosomal subunit protein bL36 (38 aa).

It belongs to the bacterial ribosomal protein bL36 family.

The protein is Large ribosomal subunit protein bL36 of Buchnera aphidicola subsp. Cinara cedri (strain Cc).